Consider the following 155-residue polypeptide: UPF0178 protein Amet_2995 (155 aa).

Belongs to the UPF0178 family.

The protein is UPF0178 protein Amet_2995 of Alkaliphilus metalliredigens (strain QYMF).